The sequence spans 414 residues: Serine hydroxymethyltransferase (414 aa).

Residues Leu117 and 121–123 (GHL) contribute to the (6S)-5,6,7,8-tetrahydrofolate site. Lys226 is subject to N6-(pyridoxal phosphate)lysine. Residue 349 to 351 (SPF) participates in (6S)-5,6,7,8-tetrahydrofolate binding.

Belongs to the SHMT family. Homodimer. It depends on pyridoxal 5'-phosphate as a cofactor.

It localises to the cytoplasm. It catalyses the reaction (6R)-5,10-methylene-5,6,7,8-tetrahydrofolate + glycine + H2O = (6S)-5,6,7,8-tetrahydrofolate + L-serine. It functions in the pathway one-carbon metabolism; tetrahydrofolate interconversion. The protein operates within amino-acid biosynthesis; glycine biosynthesis; glycine from L-serine: step 1/1. Functionally, catalyzes the reversible interconversion of serine and glycine with tetrahydrofolate (THF) serving as the one-carbon carrier. This reaction serves as the major source of one-carbon groups required for the biosynthesis of purines, thymidylate, methionine, and other important biomolecules. Also exhibits THF-independent aldolase activity toward beta-hydroxyamino acids, producing glycine and aldehydes, via a retro-aldol mechanism. This is Serine hydroxymethyltransferase from Desulfovibrio desulfuricans (strain ATCC 27774 / DSM 6949 / MB).